A 36-amino-acid polypeptide reads, in one-letter code: Lambda-hexatoxin-Hv1b (36 aa).

4 disulfides stabilise this stretch: Cys3–Cys17, Cys10–Cys22, Cys13–Cys14, and Cys16–Cys33.

It belongs to the neurotoxin 11 (kappa toxin) family. Expressed by the venom gland.

It localises to the secreted. In terms of biological role, this excitatory toxin inhibits insect calcium-activated potassium (KCa) channels (Slo-type). The sequence is that of Lambda-hexatoxin-Hv1b from Hadronyche versuta (Blue mountains funnel-web spider).